Consider the following 508-residue polypeptide: Probable metalloreductase AIM14 (508 aa).

A run of 8 helical transmembrane segments spans residues 18–38 (LPYGYYVLGVIVFYTIFLIVM), 70–90 (PLLLLLVFVPFIHKYSLVAYI), 100–120 (LSYVLVILNVLLTLRPANPIL), 137–157 (FVTVIGIIHGIGFIVKWSLDP), 168–188 (LFNFIGVIAFVPLFILMFASV), 198–218 (SFYVIHQLGQWAMVFLVPIHA), 222–242 (VTVPYFFILLALYIWRGISYI), and 347–367 (VAIVVGGSGISFGLSIFKYLQ). Positions 97 to 214 (LGRLSYVLVI…LGQWAMVFLV (118 aa)) constitute a Ferric oxidoreductase domain. An FAD-binding FR-type domain is found at 241-361 (YIYYSTTVNV…GGSGISFGLS (121 aa)).

The protein belongs to the ferric reductase (FRE) family. AIM14 subfamily.

It is found in the membrane. Functionally, probable cell surface metalloreductase. May be involved in iron or copper homeostasis. The polypeptide is Probable metalloreductase AIM14 (AIM14) (Kluyveromyces lactis (strain ATCC 8585 / CBS 2359 / DSM 70799 / NBRC 1267 / NRRL Y-1140 / WM37) (Yeast)).